Consider the following 131-residue polypeptide: Small ribosomal subunit protein uS8 (131 aa).

The protein belongs to the universal ribosomal protein uS8 family. As to quaternary structure, part of the 30S ribosomal subunit. Contacts proteins S5 and S12.

In terms of biological role, one of the primary rRNA binding proteins, it binds directly to 16S rRNA central domain where it helps coordinate assembly of the platform of the 30S subunit. The chain is Small ribosomal subunit protein uS8 from Ralstonia nicotianae (strain ATCC BAA-1114 / GMI1000) (Ralstonia solanacearum).